The following is a 789-amino-acid chain: GDH/6PGL endoplasmic bifunctional protein (789 aa).

The first 16 residues, 1-16 (MLLAAMCLALLGCLQA), serve as a signal peptide directing secretion. A Pyrrolidone carboxylic acid modification is found at Gln17. Residues 17–524 (QELKGHVSII…GGQLTFSQQQ (508 aa)) form a hexose-6-phosphate dehydrogenase region. NADP(+)-binding positions include 29–36 (GATGDLAK) and Tyr146. An N-linked (GlcNAc...) asparagine glycan is attached at Asn154. Lys171 provides a ligand contact to NADP(+). Residues Lys171, 201 to 205 (HYLGK), Glu240, and Asp259 contribute to the D-glucose 6-phosphate site. The residue at position 205 (Lys205) is an N6-succinyllysine. His264 serves as the catalytic Proton acceptor. A glycan (N-linked (GlcNAc...) asparagine) is linked at Asn279. 2 residues coordinate D-glucose 6-phosphate: Lys357 and Arg362. Arg367 lines the NADP(+) pocket. At Lys424 the chain carries N6-succinyllysine. Positions 525–538 (LEVLIPDLGSVPKP) are linker. Residues 539–789 (SDFQVLGARY…WYMDYEAFLG (251 aa)) form a 6-phosphogluconolactonase region. Residue Trp615 coordinates NADP(+). Asn681 carries N-linked (GlcNAc...) asparagine glycosylation.

In the N-terminal section; belongs to the glucose-6-phosphate dehydrogenase family. It in the C-terminal section; belongs to the glucosamine/galactosamine-6-phosphate isomerase family. 6-phosphogluconolactonase subfamily. Homodimer. Expressed in liver (at protein level). Expressed in muscles. Expressed in adipose tissues.

It localises to the endoplasmic reticulum lumen. It carries out the reaction D-glucose 6-phosphate + NAD(+) = 6-phospho-D-glucono-1,5-lactone + NADH + H(+). It catalyses the reaction D-glucose 6-phosphate + NADP(+) = 6-phospho-D-glucono-1,5-lactone + NADPH + H(+). The enzyme catalyses 6-phospho-D-glucono-1,5-lactone + H2O = 6-phospho-D-gluconate + H(+). The catalysed reaction is 2-deoxy-D-glucose 6-phosphate + NAD(+) = 2-deoxy-6-phospho-D-glucono-1,5-lactone + NADH + H(+). It carries out the reaction 2-deoxy-D-glucose 6-phosphate + NADP(+) = 2-deoxy-6-phospho-D-glucono-1,5-lactone + NADPH + H(+). It catalyses the reaction D-galactose 6-phosphate + NADP(+) = 6-phospho-D-galactono-1,5-lactone + NADPH + H(+). The enzyme catalyses D-galactose 6-phosphate + NAD(+) = 6-phospho-D-galactono-1,5-lactone + NADH + H(+). The catalysed reaction is D-glucosamine 6-phosphate + NADP(+) = 2-amino-2-deoxy-6-phospho-D-glucono-1,5-lactone + NADPH + 2 H(+). It carries out the reaction D-glucose + NAD(+) = D-glucono-1,5-lactone + NADH + H(+). It catalyses the reaction D-glucose + NADP(+) = D-glucono-1,5-lactone + NADPH + H(+). The enzyme catalyses D-glucose 6-sulfate + NADP(+) = 6-sulfo-D-glucono-1,5-lactone + NADPH + H(+). The protein operates within carbohydrate degradation; pentose phosphate pathway; D-ribulose 5-phosphate from D-glucose 6-phosphate (oxidative stage). It participates in carbohydrate degradation; pentose phosphate pathway; D-ribulose 5-phosphate from D-glucose 6-phosphate (oxidative stage): step 2/3. In terms of biological role, bifunctional enzyme localized in the lumen of the endoplasmic reticulum that catalyzes the first two steps of the oxidative branch of the pentose phosphate pathway/shunt, an alternative to glycolysis and a major source of reducing power and metabolic intermediates for biosynthetic processes. Has a hexose-6-phosphate dehydrogenase activity, with broad substrate specificity compared to glucose-6-phosphate 1-dehydrogenase/G6PD, and catalyzes the first step of the pentose phosphate pathway. In addition, acts as a 6-phosphogluconolactonase and catalyzes the second step of the pentose phosphate pathway. May have a dehydrogenase activity for alternative substrates including glucosamine 6-phosphate and glucose 6-sulfate. The main function of this enzyme is to provide reducing equivalents such as NADPH to maintain the adequate levels of reductive cofactors in the oxidizing environment of the endoplasmic reticulum. By producing NADPH that is needed by reductases of the lumen of the endoplasmic reticulum like corticosteroid 11-beta-dehydrogenase isozyme 1/HSD11B1, indirectly regulates their activity. The chain is GDH/6PGL endoplasmic bifunctional protein from Mus musculus (Mouse).